The chain runs to 151 residues: uncharacterized protein (151 aa).

It to equivalent protein in phage 82.

This is an uncharacterized protein from Escherichia coli (strain K12).